A 106-amino-acid polypeptide reads, in one-letter code: Tripartite terminase subunit 2 (106 aa).

This sequence belongs to the herpesviridae TRM2 protein family. In terms of assembly, associates with TRM1 and TRM3 to form the tripartite terminase complex.

It is found in the host nucleus. Component of the molecular motor that translocates viral genomic DNA in empty capsid during DNA packaging. Forms a tripartite terminase complex together with TRM1 and TRM3 in the host cytoplasm. Once the complex reaches the host nucleus, it interacts with the capsid portal vertex. This portal forms a ring in which genomic DNA is translocated into the capsid. The polypeptide is Tripartite terminase subunit 2 (Homo sapiens (Human)).